We begin with the raw amino-acid sequence, 359 residues long: MAIEQEHRKKASGWAARDSSGVLSPFNFYRRETGEKDVTFKVLYCGICHSDLHMVKNEWGFSTYPLVPGHEIVGEVTEVGSKVQKFKVGDRVGVGCIVGSCRSCENCTDHLENYCPKQILTYGAKYYDGSTTYGGYSDIMVADEHFIVRIPDNLPLDGAAPLLCAGITTYSPLRYFGLDKPGMHVGVVGLGGLGHVAVKFAKAMGVKVTVISTSPKKEEEALKHLGADSFLVSRDQDQMQAAIGTMDGIIDTVSAQHPLLPLIGLLNSHGKLVMVGAPEKPLELPVFPLLMGRKMVAGSGIGGMKETQEMIDFAARHNITADIEVIPIDYLNTAMERLVKADVRYRFVIDIGNTLKVRS.

Positions 48, 70, 101, 104, 107, 115, and 164 each coordinate Zn(2+).

The protein belongs to the zinc-containing alcohol dehydrogenase family. The cofactor is Zn(2+).

The catalysed reaction is D-mannitol + NAD(+) = D-mannose + NADH + H(+). In terms of biological role, oxidizes mannitol to mannose. Provides the initial step by which translocated mannitol is committed to central metabolism and, by regulating mannitol pool size, is important in regulating salt tolerance at the cellular level. This chain is Probable mannitol dehydrogenase (CAD), found in Fragaria ananassa (Strawberry).